We begin with the raw amino-acid sequence, 627 residues long: Pheromone B alpha 2 receptor (627 aa).

The Extracellular segment spans residues 1–7 (MLDPTYP). A helical transmembrane segment spans residues 8-28 (AFPIFAFLGIVCCLVPLPWHL). Over 29–35 (QSWNSGT) the chain is Cytoplasmic. The chain crosses the membrane as a helical span at residues 36 to 56 (CFLMIWTAVACLNMFVNSIIW). Over 57 to 69 (KDHAQNVAPVWCE) the chain is Extracellular. The helical transmembrane segment at 70–90 (ISIRITLGASVGIPASSLCIV) threads the bilayer. The Cytoplasmic portion of the chain corresponds to 91-102 (RRLYSIAKKFRA). A helical membrane pass occupies residues 103 to 123 (VMVDALICVLFPILYIILQIV). The Extracellular segment spans residues 124 to 150 (VQGHRFNILENIGCFPAIINTPLTYPL). The helical transmembrane segment at 151–171 (TFMWPVLIGVISFIYSTLALI) threads the bilayer. Over 172–197 (QFNRHRLQFTQFLHSNSTLSVSRYLR) the chain is Cytoplasmic. A helical transmembrane segment spans residues 198 to 218 (LMALAMTEMMCTTPMGVFVII). The Extracellular segment spans residues 219 to 260 (LNAKATPVSPYVSWAVTHYGYGRIDQVPAIIWRSNRLLVASY). A helical transmembrane segment spans residues 261-281 (ELTRWSSPAIALIFFFYFGFA). Topologically, residues 282 to 627 (QEARRNYAAA…ASPRTHRASV (346 aa)) are cytoplasmic. 3 disordered regions span residues 363–405 (LPRP…SSPI), 479–505 (TVPQ…SSSA), and 518–627 (LPST…RASV). Residues 372-387 (SSSGFSSSDSTRFGSS) show a composition bias toward low complexity. Composition is skewed to polar residues over residues 519–533 (PSTT…SLPT) and 545–555 (SLSQLFGISSM). Positions 569–607 (ATGTASPTTTAPAPASTTIAPASATMAPATTTTAPTTIA) are enriched in low complexity.

It belongs to the G-protein coupled receptor 4 family.

It is found in the cell membrane. In terms of biological role, receptor for the BAP2 pheromone, a prenylated mating factor. The receptor/pheromone interaction may have a role in the fusion of clamp cells. The protein is Pheromone B alpha 2 receptor (BAR2) of Schizophyllum commune (Split gill fungus).